Consider the following 467-residue polypeptide: Dihydrolipoyl dehydrogenase 3 (467 aa).

FAD is bound by residues 34-43 (EGRETLGGTC), Lys-52, and Ala-116. Cysteines 43 and 48 form a disulfide. Residues 182 to 186 (GAGVI), Glu-205, Val-239, and 272 to 275 (AIGR) each bind NAD(+). Residues Asp-314 and Ala-322 each contribute to the FAD site. His-446 functions as the Proton acceptor in the catalytic mechanism.

This sequence belongs to the class-I pyridine nucleotide-disulfide oxidoreductase family. As to quaternary structure, homodimer. Requires FAD as cofactor.

It localises to the cytoplasm. The catalysed reaction is N(6)-[(R)-dihydrolipoyl]-L-lysyl-[protein] + NAD(+) = N(6)-[(R)-lipoyl]-L-lysyl-[protein] + NADH + H(+). In terms of biological role, LPD-3 may substitute for lipoamide dehydrogenase of the 2-oxoglutarate dehydrogenase and pyruvate multienzyme complexes when the latter is inactive or missing. In Pseudomonas aeruginosa (strain ATCC 15692 / DSM 22644 / CIP 104116 / JCM 14847 / LMG 12228 / 1C / PRS 101 / PAO1), this protein is Dihydrolipoyl dehydrogenase 3 (lpd3).